Consider the following 181-residue polypeptide: Ribonuclease HII (181 aa).

Residues 1–181 enclose the RNase H type-2 domain; that stretch reads MICGIDEVGR…SLHRKSFRLI (181 aa). Residues aspartate 6, glutamate 7, and aspartate 98 each coordinate a divalent metal cation.

Belongs to the RNase HII family. It depends on Mn(2+) as a cofactor. Requires Mg(2+) as cofactor.

Its subcellular location is the cytoplasm. The catalysed reaction is Endonucleolytic cleavage to 5'-phosphomonoester.. In terms of biological role, endonuclease that specifically degrades the RNA of RNA-DNA hybrids. This chain is Ribonuclease HII, found in Borrelia recurrentis (strain A1).